The following is a 208-amino-acid chain: Sodium/potassium-transporting ATPase subunit beta-1-interacting protein 2 (208 aa).

Transmembrane regions (helical) follow at residues 1 to 23, 35 to 55, 62 to 82, and 153 to 173; these read MGYC…CVLE, APIL…FGTI, ITGY…VICF, and LQIV…KCIT.

Belongs to the NKAIN family. In terms of assembly, interacts with ATP1B1. Expressed in fetal brain. Weakly expressed in adult brain and thymus. Not expressed in any other normal tissue examined.

Its subcellular location is the cell membrane. The polypeptide is Sodium/potassium-transporting ATPase subunit beta-1-interacting protein 2 (NKAIN2) (Homo sapiens (Human)).